The sequence spans 426 residues: Glutamate-1-semialdehyde 2,1-aminomutase (426 aa).

Lysine 265 is subject to N6-(pyridoxal phosphate)lysine.

It belongs to the class-III pyridoxal-phosphate-dependent aminotransferase family. HemL subfamily. In terms of assembly, homodimer. Pyridoxal 5'-phosphate serves as cofactor.

The protein localises to the cytoplasm. The enzyme catalyses (S)-4-amino-5-oxopentanoate = 5-aminolevulinate. Its pathway is porphyrin-containing compound metabolism; protoporphyrin-IX biosynthesis; 5-aminolevulinate from L-glutamyl-tRNA(Glu): step 2/2. The polypeptide is Glutamate-1-semialdehyde 2,1-aminomutase (Erwinia tasmaniensis (strain DSM 17950 / CFBP 7177 / CIP 109463 / NCPPB 4357 / Et1/99)).